A 169-amino-acid chain; its full sequence is Probable inosine/xanthosine triphosphatase (169 aa).

Residue Asp58 participates in Mg(2+) binding.

This sequence belongs to the YjjX NTPase family. As to quaternary structure, homodimer. Mg(2+) is required as a cofactor. It depends on Mn(2+) as a cofactor.

The enzyme catalyses XTP + H2O = XDP + phosphate + H(+). The catalysed reaction is ITP + H2O = IDP + phosphate + H(+). Phosphatase that hydrolyzes non-canonical purine nucleotides such as XTP and ITP to their respective diphosphate derivatives. Probably excludes non-canonical purines from DNA/RNA precursor pool, thus preventing their incorporation into DNA/RNA and avoiding chromosomal lesions. The polypeptide is Probable inosine/xanthosine triphosphatase (Archaeoglobus fulgidus (strain ATCC 49558 / DSM 4304 / JCM 9628 / NBRC 100126 / VC-16)).